Reading from the N-terminus, the 326-residue chain is Fructose operon regulatory protein (326 aa).

The region spanning 1–58 (MTLDEIAKLAGVSKTTASYVINGKAQKYRISEKTQHKVMAVVEQYNFRPDHAASALRA) is the HTH lacI-type domain. Positions 3–22 (LDEIAKLAGVSKTTASYVIN) form a DNA-binding region, H-T-H motif.

In terms of assembly, homodimer.

Its activity is regulated as follows. Interaction with F1P may induce a structural change in the DNA spacer region between the -35 and -10 elements, thereby facilitating RNAP binding to the promoter to trigger the transcriptional activation of the fru operon. Interaction with F1P does not release FruR from its binding sequence. Regulates the expression of the fruBKA (fru) operon, which encodes proteins involved in the import and metabolism of fructose. In the absence of fructose 1-phosphate (F1P), binds to the promoter region of fruB, interferes with the binding of the RNA polymerase (RNAP) to the promoter and represses the expression of the operon. In the presence of F1P, activates the transcription of the fru operon by facilitating the binding of RNAP to the promoter. Essential for the expression of the fru operon and thus for growth on fructose. This Vibrio cholerae serotype O1 (strain ATCC 39315 / El Tor Inaba N16961) protein is Fructose operon regulatory protein.